The sequence spans 215 residues: MOB kinase activator-like 1B (215 aa).

Residues 1–29 are disordered; that stretch reads MSLFGLGSRNQKTFRPKKSAPTGSKGAQL. Zn(2+) is bound by residues cysteine 80, cysteine 85, histidine 162, and histidine 167.

This sequence belongs to the MOB1/phocein family. In terms of tissue distribution, constitutively expressed with higher expression in roots, flowers and pods than in leaves and stems.

It is found in the cytoplasm. It localises to the cytoskeleton. The protein resides in the phragmoplast. The protein is MOB kinase activator-like 1B of Medicago sativa subsp. falcata (Sickle medic).